The chain runs to 152 residues: MFSGASAINLDAKGRIAIPKRYRESLHACHNNQLVITVDIQSSCLLLYPIHEWEQVAAKLASLSDTQPTERAIKRMLLGYAHECELDGNGRMLLPPPLRQYANLDKRAMLVGQLNKFELWDEAAWQQQIEQSRIAILNEDLAANERLADFSL.

SpoVT-AbrB domains lie at alanine 5–glutamate 52 and alanine 81–alanine 124.

Belongs to the MraZ family. In terms of assembly, forms oligomers.

It is found in the cytoplasm. The protein resides in the nucleoid. The sequence is that of Transcriptional regulator MraZ from Shewanella pealeana (strain ATCC 700345 / ANG-SQ1).